The primary structure comprises 345 residues: MEPQKIMPPSKPHPPVVGKVTHHSIELYWDLEKKAKRQGPQEQWFRFSIEEEDPKMHTYGIIYTGYATKHVVEGLEPRTLYRFRLKVTSPSGECEYSPLVSVSTTREPISSEHLHRAVSVNDEDLLVRILQGGRVKVDVPNKFGFTALMVAAQKGYTRLVKILVSNGTDVNLKNGSGKDSLMLACYAGHLDVVKYLRRHGASWQARDLGGCTALHWAADGGHCSVIEWMIKDGCEVDVVDTGSGWTPLMRVSAVSGNQRVASLLIDAGANVNVKDRNGKTPLMVAVLNNHEELVQLLLDKGADASVKNEFGKGVLEMARVFDRQSVVSLLEERKKKQRPKKSCVC.

A Fibronectin type-III domain is found at 8-108 (PPSKPHPPVV…LVSVSTTREP (101 aa)). 6 ANK repeats span residues 109-139 (ISSE…KVDV), 143-172 (FGFT…DVNL), 176-205 (SGKD…SWQA), 209-238 (GGCT…EVDV), 243-273 (SGWT…NVNV), and 277-306 (NGKT…DASV).

Interacts with COPS5; regulates the phosphorylation of JUN and the transcriptional activity of AP-1. Interacts with RYBP; may prevent the ubiquitin-mediated proteasomal degradation of FANK1. Post-translationally, polyubiquitinated. Polyubiquitination leads to proteasomal degradation. Mostly restricted to testis.

The protein resides in the nucleus. It localises to the cytoplasm. The protein localises to the cytosol. Its subcellular location is the cytoskeleton. It is found in the cilium basal body. The protein resides in the cell projection. It localises to the cilium. Functionally, through the activation of JUN and AP-1-mediated transcription, may regulate apoptosis. The protein is Fibronectin type 3 and ankyrin repeat domains protein 1 of Homo sapiens (Human).